A 327-amino-acid polypeptide reads, in one-letter code: GMP reductase (327 aa).

The Thioimidate intermediate role is filled by cysteine 176. 205–228 contributes to the NADP(+) binding site; sequence IIADGGIRTHGDIAKSIRFGASMV.

This sequence belongs to the IMPDH/GMPR family. GuaC type 2 subfamily.

The catalysed reaction is IMP + NH4(+) + NADP(+) = GMP + NADPH + 2 H(+). Functionally, catalyzes the irreversible NADPH-dependent deamination of GMP to IMP. It functions in the conversion of nucleobase, nucleoside and nucleotide derivatives of G to A nucleotides, and in maintaining the intracellular balance of A and G nucleotides. The chain is GMP reductase from Streptococcus suis (strain 98HAH33).